A 252-amino-acid polypeptide reads, in one-letter code: Enolase-phosphatase E1 (252 aa).

Mg(2+) is bound by residues aspartate 14 and glutamate 16. Substrate-binding positions include 143–144 (SS) and lysine 177. Mg(2+) is bound at residue aspartate 202.

It belongs to the HAD-like hydrolase superfamily. MasA/MtnC family. In terms of assembly, monomer. The cofactor is Mg(2+).

Its subcellular location is the cytoplasm. The protein localises to the nucleus. The catalysed reaction is 5-methylsulfanyl-2,3-dioxopentyl phosphate + H2O = 1,2-dihydroxy-5-(methylsulfanyl)pent-1-en-3-one + phosphate. Its pathway is amino-acid biosynthesis; L-methionine biosynthesis via salvage pathway; L-methionine from S-methyl-5-thio-alpha-D-ribose 1-phosphate: step 3/6. It participates in amino-acid biosynthesis; L-methionine biosynthesis via salvage pathway; L-methionine from S-methyl-5-thio-alpha-D-ribose 1-phosphate: step 4/6. Functionally, bifunctional enzyme that catalyzes the enolization of 2,3-diketo-5-methylthiopentyl-1-phosphate (DK-MTP-1-P) into the intermediate 2-hydroxy-3-keto-5-methylthiopentenyl-1-phosphate (HK-MTPenyl-1-P), which is then dephosphorylated to form the acireductone 1,2-dihydroxy-3-keto-5-methylthiopentene (DHK-MTPene). In Drosophila persimilis (Fruit fly), this protein is Enolase-phosphatase E1.